The chain runs to 953 residues: Vacuolar membrane protease (953 aa).

Residues 1-16 are Cytoplasmic-facing; it reads MDQTKPPRRNPLAFTP. Residues 17 to 37 form a helical membrane-spanning segment; the sequence is WPVTLITAVVYLAFVIPLLVI. Residues 38 to 382 are Vacuolar-facing; it reads HHVVPSAPTS…TFVLFRLHTL (345 aa). N-linked (GlcNAc...) asparagine glycosylation is found at N53 and N115. 2 residues coordinate Zn(2+): H165 and D177. E211 acts as the Proton acceptor in catalysis. Zn(2+)-binding residues include E212, E237, and H310. The helical transmembrane segment at 383–403 threads the bilayer; the sequence is FALSVTLLVVAPIVLLLTSII. At 404–437 the chain is on the cytoplasmic side; sequence LTKVDKMYLFRTSIRPEGSLEVLPLYGDRGVIRY. The chain crosses the membrane as a helical span at residues 438-458; the sequence is PFLLGIPTAVTIGLAYLLTKF. Over 459 to 464 the chain is Vacuolar; that stretch reads NPYIVH. Residues 465 to 485 traverse the membrane as a helical segment; that stretch reads SSQYAVWSMMVSVWIFLAWFV. Residues 486–499 are Cytoplasmic-facing; that stretch reads SRVADFARPSAFHR. A helical transmembrane segment spans residues 500–520; the sequence is VYTLTWTFVVMWVLQVIATVY. Residues 521–524 are Vacuolar-facing; it reads QDRW. The helical transmembrane segment at 525 to 545 threads the bilayer; the sequence is ALGGSYFIFFAYAGTFLATWI. Residues 546–650 lie on the Cytoplasmic side of the membrane; sequence SYLELFALPR…SLPKWLWLLQ (105 aa). A disordered region spans residues 570-599; sequence ASSHSSRRGLSEEDEEDEDEAPTESTSLLG. The segment covering 581–591 has biased composition (acidic residues); sequence EEDEEDEDEAP. A helical transmembrane segment spans residues 651–671; it reads FLLAAPIVLILVGPIALLLTG. The Vacuolar segment spans residues 672–684; sequence SLHQTGQDGSSSL. Residues 685–705 traverse the membrane as a helical segment; it reads FIYIAIVALTTLLLSPMLPFV. At 706 to 711 the chain is on the cytoplasmic side; the sequence is HRCTYH. Residues 712 to 732 traverse the membrane as a helical segment; that stretch reads IPLFMLAVFAGTLIYNLVAFP. Residues 733 to 953 lie on the Vacuolar side of the membrane; sequence FSDSNRLKLF…VEGRKSFEIA (221 aa). An N-linked (GlcNAc...) asparagine glycan is attached at N779.

This sequence belongs to the peptidase M28 family. The cofactor is Zn(2+).

It is found in the vacuole membrane. In terms of biological role, may be involved in vacuolar sorting and osmoregulation. This is Vacuolar membrane protease from Emericella nidulans (strain FGSC A4 / ATCC 38163 / CBS 112.46 / NRRL 194 / M139) (Aspergillus nidulans).